The primary structure comprises 210 residues: Placenta-expressed transcript 1 protein (210 aa).

The signal sequence occupies residues 1 to 26 (MAVLGSPLLPLRLFLCFGLLFFSASC). Topologically, residues 27–189 (TDHPDQCMIF…THKNSANRVF (163 aa)) are extracellular. N-linked (GlcNAc...) asparagine glycosylation is found at Asn67 and Asn94. The helical transmembrane segment at 190-209 (RSPVRDAIQILLAFLTSKLL) threads the bilayer. Residue Phe210 is a topological domain, cytoplasmic.

As to expression, highly expressed in placenta.

The protein resides in the membrane. The protein localises to the apical cell membrane. Modulates leading keratinocyte migration and cellular adhesion to matrix proteins during a wound-healing response and promotes wound repair. May play a role during trichilemmal differentiation of the hair follicle. The protein is Placenta-expressed transcript 1 protein (PLET1) of Sus scrofa (Pig).